Consider the following 406-residue polypeptide: Tyrosine--tRNA ligase (406 aa).

Residue Tyr-34 participates in L-tyrosine binding. Residues 39–48 carry the 'HIGH' region motif; sequence PTADSLHVGH. Residues Tyr-167 and Gln-171 each coordinate L-tyrosine. The short motif at 227 to 231 is the 'KMSKS' region element; that stretch reads KMGKT. Lys-230 is a binding site for ATP. Residues 339–404 form the S4 RNA-binding domain; it reads RKIVDVLFEA…GKKEYHRLLV (66 aa).

It belongs to the class-I aminoacyl-tRNA synthetase family. TyrS type 1 subfamily. Homodimer.

It is found in the cytoplasm. It carries out the reaction tRNA(Tyr) + L-tyrosine + ATP = L-tyrosyl-tRNA(Tyr) + AMP + diphosphate + H(+). Functionally, catalyzes the attachment of tyrosine to tRNA(Tyr) in a two-step reaction: tyrosine is first activated by ATP to form Tyr-AMP and then transferred to the acceptor end of tRNA(Tyr). In Caldanaerobacter subterraneus subsp. tengcongensis (strain DSM 15242 / JCM 11007 / NBRC 100824 / MB4) (Thermoanaerobacter tengcongensis), this protein is Tyrosine--tRNA ligase.